Consider the following 610-residue polypeptide: MANHDQQTVSSAAATTSASPSPVVLPKTSENEQLLRIRHSMSHVMAMAVQQLFPNARVTIGPWTESGFYYDFDNPEPFTEADLKAIKKGMIKIINKKLPLERVEVSRSEAEEKIKAQNEPYKLEILEGLQEPITLYTLGEDWWDLCAGPHVENTGQLNAKAFELESVAGAYWRGDETKAQLQRIYGTAWETAEQLAEHKRRKEEALRRDHRRIGKDLDLFSIEDEAGAGLVFWHPRGARMRLLIEEFWRQAHFEGGYELLYTPHVADISLWKTSGHLDFYAESMFGPMEVDEREYQLKPMNCPFHVLTYASKLRSYRELPIRWAELGTVYRYERPGVMHGLMRVRGFTQDDAHVFCLPEQISDEILKILDLTERILSTFDFNTYEINLSTRPEKSIGDDAVWDLATKGLIEALERKGWAYKIDEGGGAFYGPKIDLKIEDAIGRMWQCSTIQLDFNLPERFKLDYIAADGSKQRPIMIHRAIFGSLERFFGIMTENYAGDYPLWLAPEQVRLLPVTDEVQPYAESLLDQLTQAGVRATIDRSGDRLGKLIRTGEQMKIPVLAVIGAKEAEQNAVSLRSRRDGDLGVVAVADLLRAAQNANSQRAAGLELN.

The disordered stretch occupies residues 1 to 29; it reads MANHDQQTVSSAAATTSASPSPVVLPKTS. The segment covering 8 to 24 has biased composition (low complexity); sequence TVSSAAATTSASPSPVV. A catalytic region spans residues 209–502; that stretch reads DHRRIGKDLD…MTENYAGDYP (294 aa). Residues C302, H353, and H479 each contribute to the Zn(2+) site.

This sequence belongs to the class-II aminoacyl-tRNA synthetase family. Homodimer. The cofactor is Zn(2+).

It localises to the cytoplasm. It carries out the reaction tRNA(Thr) + L-threonine + ATP = L-threonyl-tRNA(Thr) + AMP + diphosphate + H(+). Catalyzes the attachment of threonine to tRNA(Thr) in a two-step reaction: L-threonine is first activated by ATP to form Thr-AMP and then transferred to the acceptor end of tRNA(Thr). Also edits incorrectly charged L-seryl-tRNA(Thr). This is Threonine--tRNA ligase from Synechococcus sp. (strain WH7803).